Consider the following 500-residue polypeptide: NAD(P)H-quinone oxidoreductase chain 4, chloroplastic (500 aa).

14 helical membrane-spanning segments follow: residues Phe-4–Leu-24, Tyr-35–Phe-55, Leu-87–Val-107, Ser-111–Ser-131, Leu-134–Met-154, Phe-167–Leu-187, Ile-211–His-231, His-242–Ile-262, Tyr-274–Thr-294, Met-313–Leu-333, Gln-334–Asp-354, Leu-386–Thr-406, Leu-417–Leu-437, and Leu-462–Val-482.

It belongs to the complex I subunit 4 family.

It is found in the plastid. The protein resides in the chloroplast thylakoid membrane. The enzyme catalyses a plastoquinone + NADH + (n+1) H(+)(in) = a plastoquinol + NAD(+) + n H(+)(out). It catalyses the reaction a plastoquinone + NADPH + (n+1) H(+)(in) = a plastoquinol + NADP(+) + n H(+)(out). The sequence is that of NAD(P)H-quinone oxidoreductase chain 4, chloroplastic from Saccharum hybrid (Sugarcane).